The primary structure comprises 355 residues: Elongation factor Ts (355 aa).

The involved in Mg(2+) ion dislocation from EF-Tu stretch occupies residues 82-85; that stretch reads TDFV.

It belongs to the EF-Ts family.

The protein localises to the cytoplasm. In terms of biological role, associates with the EF-Tu.GDP complex and induces the exchange of GDP to GTP. It remains bound to the aminoacyl-tRNA.EF-Tu.GTP complex up to the GTP hydrolysis stage on the ribosome. This is Elongation factor Ts from Helicobacter pylori (strain G27).